The primary structure comprises 131 residues: Peptide methionine sulfoxide reductase MsrB (131 aa).

A MsrB domain is found at 8–130 (LDEWRSMLDP…NSVCIDLRPR (123 aa)). Zn(2+)-binding residues include Cys-47, Cys-50, Cys-96, and Cys-99. Cys-119 serves as the catalytic Nucleophile.

It belongs to the MsrB Met sulfoxide reductase family. The cofactor is Zn(2+).

The enzyme catalyses L-methionyl-[protein] + [thioredoxin]-disulfide + H2O = L-methionyl-(R)-S-oxide-[protein] + [thioredoxin]-dithiol. This is Peptide methionine sulfoxide reductase MsrB from Pseudomonas putida (strain GB-1).